Reading from the N-terminus, the 349-residue chain is MDLFDRLKELREQGLAEIKEAESEKSLNDVRVKLVGKKGELTQILHQMKDVAPEKRREVGQKVNELRDLFNENLASAKDNLIEKAIEARLEAEKIDVTLPGRRKHVGSKHPIRIIQDDLERFFIGMGYQVVQGPEIESEHYNFEMLNLPKDHPARDMQATFYVDADHLLRSQTSPVQARTMEKHDFDKGDLKMISPGKVYRRDDDDATHSHQFMQMEGLVVGKNISLSDLKGTLELVAKHEFGQDRETRLRPSYFPFTEPSVEMDVSCFECGGKGCAICKNTGWIEVLGAGIVHPNVLSAAGIDPSVYSGFAFGLGLDRFAILKYGIDDIRDFYSDDVRFLQQFRQEED.

Residue Glu-259 coordinates Mg(2+).

Belongs to the class-II aminoacyl-tRNA synthetase family. Phe-tRNA synthetase alpha subunit type 1 subfamily. In terms of assembly, tetramer of two alpha and two beta subunits. Mg(2+) serves as cofactor.

The protein resides in the cytoplasm. The enzyme catalyses tRNA(Phe) + L-phenylalanine + ATP = L-phenylalanyl-tRNA(Phe) + AMP + diphosphate + H(+). The sequence is that of Phenylalanine--tRNA ligase alpha subunit from Lactobacillus delbrueckii subsp. bulgaricus (strain ATCC 11842 / DSM 20081 / BCRC 10696 / JCM 1002 / NBRC 13953 / NCIMB 11778 / NCTC 12712 / WDCM 00102 / Lb 14).